We begin with the raw amino-acid sequence, 363 residues long: Melanoma-associated antigen B16 (363 aa).

Residues 33–124 (EPCSSPHLMA…PDQSDSTDLP (92 aa)) form a disordered region. Over residues 82-97 (ASTSSDLQHPYDSSSE) the composition is skewed to low complexity. An MAGE domain is found at 128 to 327 (VDGKVDFLVN…TVFLSQYEEA (200 aa)). The tract at residues 342–363 (HADSSSTSGESSSDTSSNFSQV) is disordered.

In Mus musculus (Mouse), this protein is Melanoma-associated antigen B16 (Mageb16).